We begin with the raw amino-acid sequence, 445 residues long: Argininosuccinate synthase (445 aa).

ATP-binding positions include 17 to 25 (AFSGGLDTS) and alanine 43. Tyrosine 99 provides a ligand contact to L-citrulline. The ATP site is built by glycine 129 and threonine 131. L-aspartate is bound by residues threonine 131, asparagine 135, and aspartate 136. Position 135 (asparagine 135) interacts with L-citrulline. Residue aspartate 136 coordinates ATP. Residues arginine 139 and serine 192 each coordinate L-citrulline. Aspartate 194 contributes to the ATP binding site. L-citrulline-binding residues include threonine 201, glutamate 203, and glutamate 280.

The protein belongs to the argininosuccinate synthase family. Type 2 subfamily. As to quaternary structure, homotetramer.

It is found in the cytoplasm. The catalysed reaction is L-citrulline + L-aspartate + ATP = 2-(N(omega)-L-arginino)succinate + AMP + diphosphate + H(+). The protein operates within amino-acid biosynthesis; L-arginine biosynthesis; L-arginine from L-ornithine and carbamoyl phosphate: step 2/3. In Rhodopseudomonas palustris (strain BisA53), this protein is Argininosuccinate synthase.